The chain runs to 410 residues: MQTYLVGGAVRDYLLGLPVKDRDWVVVGADAQTMLAQGFQPVGKDFPVFLHPKTHEEYALARTERKTAKGYAGFSFHADKDVTLEQDLMRRDLTINAMAQDADGKIIDPFGGQRDLAAGILRHVSPAFAEDPVRILRAARFAARYGFEIAEETIKLMRQMVENGEADALVAERVWQELAKGLMEKNPRKMIEMLRECGALQVLLPEVDALFGVPQRADYHPEIDSGIHTLMTLQRAADMGLSLPERYAALLHDLGKAKTPPDILPRHHGHDINGVEPVREVNQRLRAPRQCAELAELVCRWHIIFHQVGQLKSQTILNVLKKTDAFRRPERFQTALNVCIADTQGRLNREHTPYPQRAHWLALLEAANQADSGKIAAECRAQGKAHFIAEQIDRARLAQIAPLQKTFRGA.

Gly-8 and Arg-11 together coordinate ATP. The CTP site is built by Gly-8 and Arg-11. Mg(2+) is bound by residues Asp-21 and Asp-23. ATP contacts are provided by Arg-91, Arg-137, and Arg-140. The CTP site is built by Arg-91, Arg-137, and Arg-140. The HD domain maps to 225–326 (SGIHTLMTLQ…LNVLKKTDAF (102 aa)).

Belongs to the tRNA nucleotidyltransferase/poly(A) polymerase family. Bacterial CCA-adding enzyme type 1 subfamily. As to quaternary structure, monomer. Can also form homodimers and oligomers. Requires Mg(2+) as cofactor. Ni(2+) is required as a cofactor.

The enzyme catalyses a tRNA precursor + 2 CTP + ATP = a tRNA with a 3' CCA end + 3 diphosphate. The catalysed reaction is a tRNA with a 3' CCA end + 2 CTP + ATP = a tRNA with a 3' CCACCA end + 3 diphosphate. Its function is as follows. Catalyzes the addition and repair of the essential 3'-terminal CCA sequence in tRNAs without using a nucleic acid template. Adds these three nucleotides in the order of C, C, and A to the tRNA nucleotide-73, using CTP and ATP as substrates and producing inorganic pyrophosphate. tRNA 3'-terminal CCA addition is required both for tRNA processing and repair. Also involved in tRNA surveillance by mediating tandem CCA addition to generate a CCACCA at the 3' terminus of unstable tRNAs. While stable tRNAs receive only 3'-terminal CCA, unstable tRNAs are marked with CCACCA and rapidly degraded. The sequence is that of Multifunctional CCA protein from Neisseria gonorrhoeae (strain ATCC 700825 / FA 1090).